Reading from the N-terminus, the 166-residue chain is Phosphopantetheine adenylyltransferase (166 aa).

S8 is a binding site for substrate. Residues S8–F9 and H16 each bind ATP. Residues K40, T72, and R86 each contribute to the substrate site. Residues G87 to R89, E97, and Y122 to S128 each bind ATP.

The protein belongs to the bacterial CoaD family. As to quaternary structure, homohexamer. Mg(2+) is required as a cofactor.

It is found in the cytoplasm. It carries out the reaction (R)-4'-phosphopantetheine + ATP + H(+) = 3'-dephospho-CoA + diphosphate. The protein operates within cofactor biosynthesis; coenzyme A biosynthesis; CoA from (R)-pantothenate: step 4/5. Functionally, reversibly transfers an adenylyl group from ATP to 4'-phosphopantetheine, yielding dephospho-CoA (dPCoA) and pyrophosphate. The protein is Phosphopantetheine adenylyltransferase of Synechococcus elongatus (strain ATCC 33912 / PCC 7942 / FACHB-805) (Anacystis nidulans R2).